The primary structure comprises 536 residues: Organic anion transporter 3 (536 aa).

Topologically, residues 1 to 11 (MTFSEILDRVG) are cytoplasmic. Phosphoserine is present on S4. Residues 12–32 (SMGPFQYLHVTLLALPVLGIA) traverse the membrane as a helical segment. At 33-123 (NHNLLQIFTA…LVCSSNKLKE (91 aa)) the chain is on the extracellular side. Residues N81 and N86 are each glycosylated (N-linked (GlcNAc...) asparagine). Residues 124–144 (MAQSIFMAGILVGGPVIGELS) traverse the membrane as a helical segment. Residues 145 to 158 (DRFGRKPILTWSYL) lie on the Cytoplasmic side of the membrane. A helical transmembrane segment spans residues 159 to 179 (MLAASGSGAAFSPSLPVYMIF). A topological domain (extracellular) is located at residue R180. Residues 181 to 201 (FLCGCSISGISLSTVILNVEW) form a helical membrane-spanning segment. Over 202-212 (VPTSMRAISST) the chain is Cytoplasmic. The helical transmembrane segment at 213-233 (SIGYCYTIGQFILSGLAYAIP) threads the bilayer. Residues 234 to 236 (QWR) lie on the Extracellular side of the membrane. Residues 237 to 257 (WLQLTSSAPFFIFSLLSWWVP) traverse the membrane as a helical segment. Over 258–327 (ESIRWLVLSG…FRVSILRRVT (70 aa)) the chain is Cytoplasmic. Residues 328-348 (FCLSLAWFSTGFAYYSLAMGV) traverse the membrane as a helical segment. The Extracellular segment spans residues 349-354 (EEFGVN). A helical membrane pass occupies residues 355–375 (IYILQIIFGGVDIPAKFITIL). The Cytoplasmic portion of the chain corresponds to 376–383 (SLSYLGRR). Residues 384–404 (ITQSFLLLLAGGAILALIFVP) form a helical membrane-spanning segment. Topologically, residues 405-411 (SEMQLLR) are extracellular. A helical membrane pass occupies residues 412–432 (TALAVFGKGCLSGSFSCLFLY). Over 433–471 (TSELYPTVLRQTGMGISNVWARVGSMIAPLVKITGELQP) the chain is Cytoplasmic. The chain crosses the membrane as a helical span at residues 472–492 (FIPNVIFGTTALLGGSAAFFL). The Extracellular segment spans residues 493–536 (LETLNRPLPETIEDIQNWHKQVQKTKQESEAEKASQIIPLKTGG). The disordered stretch occupies residues 515 to 536 (QKTKQESEAEKASQIIPLKTGG).

Belongs to the major facilitator (TC 2.A.1) superfamily. Organic cation transporter (TC 2.A.1.19) family. Expressed in the liver, brain, kidney, choroid plexus and weakly in the eye. Moderately expressed (at protein level) in the brain capillary endothelial cells (BCEC).

The protein localises to the basolateral cell membrane. The catalysed reaction is estrone 3-sulfate(out) + glutarate(in) = estrone 3-sulfate(in) + glutarate(out). It catalyses the reaction estrone 3-sulfate(in) + 2-oxoglutarate(out) = estrone 3-sulfate(out) + 2-oxoglutarate(in). It carries out the reaction glutarate(in) + 2-oxoglutarate(out) = glutarate(out) + 2-oxoglutarate(in). The enzyme catalyses urate(in) + 2-oxoglutarate(out) = urate(out) + 2-oxoglutarate(in). The catalysed reaction is taurocholate(out) + glutarate(in) = taurocholate(in) + glutarate(out). It catalyses the reaction dehydroepiandrosterone 3-sulfate(out) + glutarate(in) = dehydroepiandrosterone 3-sulfate(in) + glutarate(out). It carries out the reaction prostaglandin F2alpha(out) + glutarate(in) = prostaglandin F2alpha(in) + glutarate(out). The enzyme catalyses prostaglandin F2alpha(out) + 2-oxoglutarate(in) = prostaglandin F2alpha(in) + 2-oxoglutarate(out). The catalysed reaction is (R)-carnitine(out) + 2-oxoglutarate(in) = (R)-carnitine(in) + 2-oxoglutarate(out). It catalyses the reaction glutarate(in) + (R)-carnitine(out) = glutarate(out) + (R)-carnitine(in). It carries out the reaction prostaglandin E2(out) + 2-oxoglutarate(in) = prostaglandin E2(in) + 2-oxoglutarate(out). The enzyme catalyses prostaglandin E2(out) + glutarate(in) = prostaglandin E2(in) + glutarate(out). The catalysed reaction is urate(in) + glutarate(out) = urate(out) + glutarate(in). It catalyses the reaction taurocholate(out) + 2-oxoglutarate(in) = taurocholate(in) + 2-oxoglutarate(out). It carries out the reaction dehydroepiandrosterone 3-sulfate(out) + 2-oxoglutarate(in) = dehydroepiandrosterone 3-sulfate(in) + 2-oxoglutarate(out). The enzyme catalyses kynurenate(out) + a dicarboxylate(in) = kynurenate(in) + a dicarboxylate(out). The catalysed reaction is (indol-3-yl)acetate(out) + a dicarboxylate(in) = (indol-3-yl)acetate(in) + a dicarboxylate(out). It catalyses the reaction indoxyl sulfate(out) + a dicarboxylate(in) = indoxyl sulfate(in) + a dicarboxylate(out). It carries out the reaction N-benzoylglycine(out) + a dicarboxylate(in) = N-benzoylglycine(in) + a dicarboxylate(out). The enzyme catalyses 3-carboxy-4-methyl-5-propyl-2-furanpropanoate(out) + a dicarboxylate(in) = 3-carboxy-4-methyl-5-propyl-2-furanpropanoate(in) + a dicarboxylate(out). The catalysed reaction is (6R)-L-erythro-5,6,7,8-tetrahydrobiopterin(out) + a dicarboxylate(in) = (6R)-L-erythro-5,6,7,8-tetrahydrobiopterin(in) + a dicarboxylate(out). It catalyses the reaction L-erythro-7,8-dihydrobiopterin(out) + a dicarboxylate(in) = L-erythro-7,8-dihydrobiopterin(in) + a dicarboxylate(out). It carries out the reaction L-sepiapterin(out) + a dicarboxylate(in) = L-sepiapterin(in) + a dicarboxylate(out). Functionally, functions as an organic anion/dicarboxylate exchanger that couples organic anion uptake indirectly to the sodium gradient. Transports organic anions such as estrone 3-sulfate (E1S) and urate in exchange for dicarboxylates such as glutarate or ketoglutarate (2-oxoglutarate). Plays an important role in the excretion of endogenous and exogenous organic anions, especially from the kidney and the brain. E1S transport is pH- and chloride-dependent and may also involve E1S/cGMP exchange. Responsible for the transport of prostaglandin E2 (PGE2) and prostaglandin F2(alpha) (PGF2(alpha)) in the basolateral side of the renal tubule. Involved in the transport of neuroactive tryptophan metabolites kynurenate and xanthurenate. Functions as a biopterin transporters involved in the uptake and the secretion of coenzymes tetrahydrobiopterin (BH4), dihydrobiopterin (BH2) and sepiapterin to urine, thereby determining baseline levels of blood biopterins. May be involved in the basolateral transport of steviol, a metabolite of the popular sugar substitute stevioside. May participate in the detoxification/ renal excretion of drugs and xenobiotics, such as the histamine H(2)-receptor antagonists fexofenadine and cimetidine, the antibiotic benzylpenicillin (PCG), the anionic herbicide 2,4-dichloro-phenoxyacetate (2,4-D), the diagnostic agent p-aminohippurate (PAH), the antiviral acyclovir (ACV), and the mycotoxin ochratoxin (OTA), by transporting these exogenous organic anions across the cell membrane in exchange for dicarboxylates such as 2-oxoglutarate. Contributes to the renal uptake of potent uremic toxins (indoxyl sulfate (IS), indole acetate (IA), hippurate/N-benzoylglycine (HA) and 3-carboxy-4-methyl-5-propyl-2-furanpropionate (CMPF)), pravastatin, PCG, E1S and dehydroepiandrosterone sulfate (DHEAS), and is partly involved in the renal uptake of temocaprilat (an angiotensin-converting enzyme (ACE) inhibitor). May contribute to the release of cortisol in the adrenals. Involved in one of the detoxification systems on the choroid plexus (CP), removes substrates such as E1S or taurocholate (TC), PCG, 2,4-D and PAH, from the cerebrospinal fluid (CSF) to the blood for eventual excretion in urine and bile. Regulates the CSF concentration of histamine H(2)-receptor antagonists cimetidine and ranitidine at the CP. Also contributes to the uptake of several other organic compounds such as the prostanoids prostaglandin E(2) and prostaglandin F(2-alpha), L-carnitine, and the therapeutic drugs allopurinol, 6-mercaptopurine (6-MP) and 5-fluorouracil (5-FU). Mediates the uptake from brain of organic anions, such as E1S, PAH, and OTA. Mediates the transport of PAH, PCG, and the statins pravastatin and pitavastatin, from the cerebrum into the blood circulation across the blood-brain barrier (BBB). In summary, plays a role in the efflux of drugs and xenobiotics, helping reduce their undesired toxicological effects on the body. The chain is Organic anion transporter 3 (Slc22a8) from Rattus norvegicus (Rat).